Reading from the N-terminus, the 331-residue chain is MIEISNLFFNYQNKEVLKIKNLKLDTSKISILMGANGSGKSTFLRILKFLEGDFSKNISYFGNFKPNNKQKREIYLLFPEPILLNRSVRANFLFTLKTYGIKEDIEERIKESLMFLNLDESLLSKHPNELSSGQSQKIAFAIALSVRAKYYLLDEPSAFLDKNTTLLFKKTILKMHENFNTGFLIASHDKHFLDSLAQKKLYLHSGEILEFENTNVFELENQGVKFCNFIDFSNCKKYKDFKKPPSKIAIDPYKISFFNSKNIPKNNYDFILEKCYIIALRSRKSDVFIRVSCMDKILEFALEKQEFLRFDLKLYEELSLYFYEDAICFLN.

Positions 2–230 (IEISNLFFNY…NQGVKFCNFI (229 aa)) constitute an ABC transporter domain. 34–41 (GANGSGKS) is a binding site for ATP.

It belongs to the ABC transporter superfamily. In terms of assembly, the complex is composed of two ATP-binding proteins (TupC), two transmembrane proteins (TupB) and a solute-binding protein (TupA).

It carries out the reaction tungstate(in) + ATP + H2O = tungstate(out) + ADP + phosphate + H(+). Part of an ABC transporter complex involved in ultra-high affinity tungstate uptake. Probably responsible for energy coupling to the transport system. This is Tungstate uptake system ATP-binding protein TupC from Campylobacter jejuni subsp. jejuni serotype O:2 (strain ATCC 700819 / NCTC 11168).